The sequence spans 271 residues: MPELPEVEVTRQGIAPFLVEQTVVDLVIRNGSLRWPVPDIAKQIIGQVIRQVRRRAKYLLIDTDAGTSIVHLGMSGSLRILPHDTPVEKHDHIDLVLANGRILRFNDPRRFGAWLWCELPEEAHPLLAKLGPEPLTNAFNVTQLAAALAGKKKAIKLCLMDNHIVVGVGNIYANEALFAAGIHPEAEAGKIDIERLTVLVAEVKQILAHAIKQGGTTLKDFTNADGKPGYFAQKLHVYSRGGETCTSCGNLLSEIRLGQRTTVFCGICQTR.

Proline 2 (schiff-base intermediate with DNA) is an active-site residue. The Proton donor role is filled by glutamate 3. Residue lysine 57 is the Proton donor; for beta-elimination activity of the active site. DNA is bound by residues histidine 90, arginine 109, and lysine 151. The FPG-type zinc-finger motif lies at histidine 236–threonine 270. The active-site Proton donor; for delta-elimination activity is arginine 260.

Belongs to the FPG family. In terms of assembly, monomer. Requires Zn(2+) as cofactor.

It carries out the reaction Hydrolysis of DNA containing ring-opened 7-methylguanine residues, releasing 2,6-diamino-4-hydroxy-5-(N-methyl)formamidopyrimidine.. The enzyme catalyses 2'-deoxyribonucleotide-(2'-deoxyribose 5'-phosphate)-2'-deoxyribonucleotide-DNA = a 3'-end 2'-deoxyribonucleotide-(2,3-dehydro-2,3-deoxyribose 5'-phosphate)-DNA + a 5'-end 5'-phospho-2'-deoxyribonucleoside-DNA + H(+). In terms of biological role, involved in base excision repair of DNA damaged by oxidation or by mutagenic agents. Acts as a DNA glycosylase that recognizes and removes damaged bases. Has a preference for oxidized purines, such as 7,8-dihydro-8-oxoguanine (8-oxoG). Has AP (apurinic/apyrimidinic) lyase activity and introduces nicks in the DNA strand. Cleaves the DNA backbone by beta-delta elimination to generate a single-strand break at the site of the removed base with both 3'- and 5'-phosphates. The chain is Formamidopyrimidine-DNA glycosylase from Shewanella baltica (strain OS195).